The chain runs to 213 residues: Embryo-specific protein ATS3 (213 aa).

A signal peptide spans 1-21 (MTFPSLSVSFLFFAFIFVTHA). The PLAT domain occupies 34–148 (CPYTVVVMTS…LNTWYGHNNC (115 aa)). A disordered region spans residues 147 to 188 (NCNTTGRPSSPDLPPPHFPPEFPPETPTTPPPPPPRPSAASR). Asparagine 149 carries an N-linked (GlcNAc...) asparagine glycan. Residues 157 to 183 (PDLPPPHFPPEFPPETPTTPPPPPPRP) show a composition bias toward pro residues.

As to expression, expressed in seeds. Expression is restricted to the developing embryo.

The protein resides in the secreted. Its function is as follows. May play a role during embryo development. This is Embryo-specific protein ATS3 from Arabidopsis thaliana (Mouse-ear cress).